Reading from the N-terminus, the 453-residue chain is Adenosylmethionine-8-amino-7-oxononanoate aminotransferase (453 aa).

118–119 provides a ligand contact to pyridoxal 5'-phosphate; it reads GA. Tyr151 contributes to the substrate binding site. Asp257 is a pyridoxal 5'-phosphate binding site. Substrate is bound by residues Lys286, Gly321, and Arg416. Lys286 carries the N6-(pyridoxal phosphate)lysine modification.

This sequence belongs to the class-III pyridoxal-phosphate-dependent aminotransferase family. BioA subfamily. In terms of assembly, homodimer. Pyridoxal 5'-phosphate serves as cofactor.

It is found in the cytoplasm. The catalysed reaction is (8S)-8-amino-7-oxononanoate + S-adenosyl-L-methionine = S-adenosyl-4-methylsulfanyl-2-oxobutanoate + (7R,8S)-7,8-diammoniononanoate. Its pathway is cofactor biosynthesis; biotin biosynthesis; 7,8-diaminononanoate from 8-amino-7-oxononanoate (SAM route): step 1/1. In terms of biological role, catalyzes the transfer of the alpha-amino group from S-adenosyl-L-methionine (SAM) to 7-keto-8-aminopelargonic acid (KAPA) to form 7,8-diaminopelargonic acid (DAPA). It is the only aminotransferase known to utilize SAM as an amino donor. This Aquifex aeolicus (strain VF5) protein is Adenosylmethionine-8-amino-7-oxononanoate aminotransferase.